Here is a 159-residue protein sequence, read N- to C-terminus: Capsid protein (159 aa).

At Ser2 the chain carries N-acetylserine; by host.

Belongs to the virgaviridae capsid protein family.

It is found in the virion. In terms of biological role, capsid protein self-assembles to form rod-shaped virions about 18 nm in diameter with a central canal enclosing the viral genomic RNA. The sequence is that of Capsid protein (CP) from Tobacco mosaic virus (strain Rakkyo) (TMV-R).